We begin with the raw amino-acid sequence, 366 residues long: Peptide chain release factor 2 (366 aa).

Glutamine 251 is subject to N5-methylglutamine.

This sequence belongs to the prokaryotic/mitochondrial release factor family. In terms of processing, methylated by PrmC. Methylation increases the termination efficiency of RF2.

It is found in the cytoplasm. Functionally, peptide chain release factor 2 directs the termination of translation in response to the peptide chain termination codons UGA and UAA. This Exiguobacterium sp. (strain ATCC BAA-1283 / AT1b) protein is Peptide chain release factor 2.